The following is a 165-amino-acid chain: uncharacterized protein (165 aa).

The Cupin type-1 domain occupies 28–139; the sequence is QNALKDTGLA…KPNEREEAVK (112 aa).

This is an uncharacterized protein from Bacillus subtilis (strain 168).